The chain runs to 30 residues: Cycloviolacin-O1 (30 aa).

Residues 1-30 (GIPCAESCVYIPCTVTALLGCSCSNRVCYN) constitute a cross-link (cyclopeptide (Gly-Asn)). 3 cysteine pairs are disulfide-bonded: Cys4-Cys21, Cys8-Cys23, and Cys13-Cys28.

This is a cyclic peptide. As to expression, expressed in leaves, petals, petioles and roots but not in runners (at protein level).

Its function is as follows. Probably participates in a plant defense mechanism. In Viola odorata (Sweet violet), this protein is Cycloviolacin-O1.